The chain runs to 675 residues: Secretogranin-1 (675 aa).

The signal sequence occupies residues 1–20 (MQRAMLLGLLGAAALAAVIS). Residues C36 and C57 are joined by a disulfide bond. Residues 64–90 (SGKEVKGEEKGENENSKFEVRLLRDPS) show a composition bias toward basic and acidic residues. Disordered regions lie at residues 64 to 507 (SGKE…YPTT) and 528 to 555 (NSDF…VTMT). Phosphoserine is present on residues S93, S99, S100, S129, and S147. O-linked (Xyl...) (chondroitin sulfate) serine glycosylation occurs at S93. Composition is skewed to basic and acidic residues over residues 148-161 (KEAK…RGGK) and 168-248 (GKIY…KPQE). Phosphoserine is present on S190. S236 is a glycosylation site (O-linked (Xyl...) (chondroitin sulfate) serine). Residues 250-269 (PDQDQSEEESEEGEEGEEGA) show a composition bias toward acidic residues. S255, S259, S291, S309, and S333 each carry phosphoserine. Residues 292-311 (YEGRRPLSEERKHAAGESKD) show a composition bias toward basic and acidic residues. The residue at position 339 (Y339) is a Sulfotyrosine. 2 stretches are compositionally biased toward basic and acidic residues: residues 361 to 410 (GSEE…EGAK) and 429 to 452 (SRQE…DTAK). 4 positions are modified to phosphoserine: S362, S372, S375, and S397. A Sulfotyrosine modification is found at Y469. Phosphoserine occurs at positions 490, 529, and 540. The residue at position 563 (Y563) is a Sulfotyrosine. A disordered region spans residues 620–646 (DFYDSEEQMGPHQEAEDEKDRADQRVL). Y622 is modified (sulfotyrosine; partial). S624 carries the phosphoserine modification. Positions 637-646 (EKDRADQRVL) are enriched in basic and acidic residues. Position 674 is an arginine amide; in CCB peptide short form (R674).

Belongs to the chromogranin/secretogranin protein family. Interacts with ITPR1 in the secretory granules. Extensively processed in glucagonoma tissue by limited proteolysis at conserved basic residues. Alternative processing are seen in different tissues. The proglucagon-converting enzymes present in transformed alpha-cells are likely candidates to be involved in tissue-specific processing. In terms of tissue distribution, expressed in the brain, adrenal medulla and anterior pituitary. In the brain, localized to the hippocampal formation, the endocrine hypothalamus, the olfactory system, and in anatomically distinct structures in the pons-medulla.

It is found in the secreted. Its function is as follows. Secretogranin-1 is a neuroendocrine secretory granule protein, which may be the precursor for other biologically active peptides. The polypeptide is Secretogranin-1 (Chgb) (Rattus norvegicus (Rat)).